We begin with the raw amino-acid sequence, 1708 residues long: Rapamycin-insensitive companion of mTOR (1708 aa).

An interaction with NBN region spans residues 1–789; sequence MAAIGRGRSL…DKANLHALIQ (789 aa). S21, S35, and S265 each carry phosphoserine. A Glycyl lysine isopeptide (Lys-Gly) (interchain with G-Cter in ubiquitin) cross-link involves residue K274. A ribosome-binding domain region spans residues 521–570; sequence LKDTEEALLINLRDSQVLQHKENLDWDWNLIGTILKWPNVNLRNYKDEQL. ATP-binding residues include N543, R572, and R576. Residues 1021–1043 are compositionally biased toward low complexity; that stretch reads TLSLNSESTSSRHNSESESAPSS. The segment at 1021 to 1045 is disordered; sequence TLSLNSESTSSRHNSESESAPSSMF. Residues K1092 and K1095 each carry the N6-acetyllysine modification. Disordered regions lie at residues 1101 to 1198 and 1218 to 1247; these read SLTL…ENTS and SFNT…PTAM. At T1103 the chain carries Phosphothreonine. N6-acetyllysine occurs at positions 1116, 1119, and 1125. A Phosphothreonine; by RPS6KB1 modification is found at T1135. The residue at position 1138 (S1138) is a Phosphoserine. The segment covering 1147–1158 has biased composition (polar residues); sequence FTSSSAQKSLQL. Phosphoserine occurs at positions 1161, 1218, and 1234. Low complexity predominate over residues 1221 to 1239; it reads TDTTTSGISSMSSSPSRET. T1270 is subject to Phosphothreonine. A phosphoserine mark is found at S1273, S1277, S1281, and S1283. At T1294 the chain carries Phosphothreonine. 2 positions are modified to phosphoserine: S1301 and S1312. The residue at position 1331 (T1331) is a Phosphothreonine. Phosphoserine is present on residues S1345 and S1352. Phosphothreonine is present on T1375. S1384 bears the Phosphoserine mark. At Y1385 the chain carries Phosphotyrosine. S1387, S1395, and S1410 each carry phosphoserine. 3 residues coordinate Zn(2+): H1514, C1519, and C1522. Residues S1570, S1573, S1576, and S1591 each carry the phosphoserine modification. C1651 contributes to the Zn(2+) binding site.

It belongs to the RICTOR family. In terms of assembly, component of the mechanistic target of rapamycin complex 2 (mTORC2), consisting in two heterotretramers composed of MTOR, MLST8, RICTOR and MAPKAP1/SIN1. The mTORC2 core complex associates with PRR5/PROTOR1 and/or PRR5L/PROTOR2. Contrary to mTORC1, mTORC2 does not bind to and is not sensitive to FKBP12-rapamycin. Binds directly to MTOR and PRR5 within the TORC2 complex; interaction with MTOR is enhanced by deubiquitination of RICTOR by USP9X. Interaction with MAPKAP1 is not enhanced by RICTOR deubiquitination by USP9X. Interacts with CCDC28B. Interacts with NBN. Interacts with SIK3. Interacts with NCKAP1L. Interacts with ARMH4 (via cytoplasmic tail); this interaction bridges ARMH4 to the mTORC2 complex and inhibits the mTORC2 kinase activity. Interacts with UBXN2A. Interacts with TSPAN8. Phosphorylated by MTOR; when part of mTORC2. Phosphorylated at Thr-1135 by RPS6KB1 downstream of the mTORC1 complex: phosphorylation of RICTOR inhibits mTORC2 signaling by creating a binding site for 14-3-3 proteins. Phosphorylated at Ser-1234 by GSK3B in response to endoplasmic stress, inhibiting mTORC2 signaling. Post-translationally, ubiquitinated by the SCF(FBXW7) complex, leading to its degradation by the proteasome. Deubiquitinated by USP9X; deubiquitination stabilizes RICTOR and enhances its binding to MTOR, thus promoting mTORC2 complex assembly. In terms of processing, acetylated by EP300/p300 in response to glucose, leading to activate the mTORC2 complex. Acetylation by BLOC1S1/GCN5L1 in response to hypotoxic stress protects RICTOR against ubiquitination and subsequent degradation by the proteasome. As to expression, highest levels in liver and brain with expression also detected in heart, muscle, spleen and kidney (at protein level).

Its subcellular location is the cell membrane. It localises to the endoplasmic reticulum membrane. The protein resides in the lysosome membrane. Component of the mechanistic target of rapamycin complex 2 (mTORC2), which transduces signals from growth factors to pathways involved in proliferation, cytoskeletal organization, lipogenesis and anabolic output. In response to growth factors, mTORC2 phosphorylates and activates AGC protein kinase family members, including AKT (AKT1, AKT2 and AKT3), PKC (PRKCA, PRKCB and PRKCE) and SGK1. In contrast to mTORC1, mTORC2 is nutrient-insensitive. Within the mTORC2 complex, RICTOR probably acts as a molecular adapter. RICTOR is responsible for the FKBP12-rapamycin-insensitivity of mTORC2. mTORC2 plays a critical role in AKT1 activation by mediating phosphorylation of different sites depending on the context, such as 'Thr-450', 'Ser-473', 'Ser-477' or 'Thr-479', facilitating the phosphorylation of the activation loop of AKT1 on 'Thr-308' by PDPK1/PDK1 which is a prerequisite for full activation. mTORC2 catalyzes the phosphorylation of SGK1 at 'Ser-422' and of PRKCA on 'Ser-657'. The mTORC2 complex also phosphorylates various proteins involved in insulin signaling, such as FBXW8 and IGF2BP1. mTORC2 acts upstream of Rho GTPases to regulate the actin cytoskeleton, probably by activating one or more Rho-type guanine nucleotide exchange factors. mTORC2 promotes the serum-induced formation of stress-fibers or F-actin. Plays an essential role in embryonic growth and development. The protein is Rapamycin-insensitive companion of mTOR of Mus musculus (Mouse).